The following is a 1019-amino-acid chain: Vacuolar membrane protease (1019 aa).

At 1 to 69 the chain is on the cytoplasmic side; it reads MFLEINFYST…DRIPTVVGFR (69 aa). The chain crosses the membrane as a helical span at residues 70-90; sequence VIPTTVLVLLTYLTIFTLVIV. At 91 to 404 the chain is on the vacuolar side; it reads TDWLPEPPKN…AELVIFYLND (314 aa). The N-linked (GlcNAc...) asparagine glycan is linked to Asn-158. Zn(2+) is bound by residues His-195 and Asp-207. The active-site Proton acceptor is Glu-239. A Zn(2+)-binding site is contributed by Glu-240. A glycan (N-linked (GlcNAc...) asparagine) is linked at Asn-256. Zn(2+) contacts are provided by Glu-265 and His-341. Residues 405-425 form a helical membrane-spanning segment; it reads LLIYNVVSLVVGPISLIFFVV. The Cytoplasmic segment spans residues 426-466; it reads CEYVLRNERARQPNGHPVSRPSVLEWLKQRSWLRALWRRSK. The helical transmembrane segment at 467–487 threads the bilayer; that stretch reads FWIALVITIALQALLVWGYLA. The Vacuolar portion of the chain corresponds to 488–497; that stretch reads FNSFTVYSSP. The chain crosses the membrane as a helical span at residues 498–518; that stretch reads YLVLISFFSLAYLSLVIPLTF. At 519-539 the chain is on the cytoplasmic side; the sequence is TFNQTQSPTAKYIAPEREKHT. Residues 540 to 560 traverse the membrane as a helical segment; that stretch reads LLIQVYIFTWILLLFSTIAVA. Over 561–565 the chain is Vacuolar; sequence RAQVG. A helical membrane pass occupies residues 566–586; the sequence is GLYFVTAWNTGVWIACLLAAV. Residues 587–651 are Cytoplasmic-facing; the sequence is EGMMLPVPQG…ASLRKPQEGG (65 aa). Positions 603-634 are disordered; sequence HSAHHHHHHEHEEDQDADDDDREQRQPPTEAT. Residues 652–672 form a helical membrane-spanning segment; sequence VVGWWIVHLLLTIPAPVLLIA. Residues 673–692 lie on the Vacuolar side of the membrane; the sequence is QMGSLLLDSLPQTLADGSPA. Residues 693–713 form a helical membrane-spanning segment; that stretch reads YVVYAAASLTAVLLAVPLTPF. Residues 714–719 are Cytoplasmic-facing; sequence SGKLHR. A helical transmembrane segment spans residues 720–740; it reads GLFFLFFLSFLIVTAYLWLAF. At 741–1019 the chain is on the vacuolar side; it reads PFSSADPLKV…LVEAWSPFSV (279 aa). The N-linked (GlcNAc...) asparagine glycan is linked to Asn-774.

This sequence belongs to the peptidase M28 family. Zn(2+) is required as a cofactor.

The protein localises to the vacuole membrane. May be involved in vacuolar sorting and osmoregulation. The protein is Vacuolar membrane protease of Laccaria bicolor (strain S238N-H82 / ATCC MYA-4686) (Bicoloured deceiver).